The primary structure comprises 199 residues: uncharacterized protein (199 aa).

Residues 71–104 are a coiled coil; that stretch reads RANATNKLTVIAEQIQHLQEQARKVLEDARRDAD.

This is an uncharacterized protein from Mus musculus (Mouse).